A 645-amino-acid chain; its full sequence is Glucans biosynthesis glucosyltransferase H (645 aa).

Residues 1-28 (MDGTVTLSPAPTDLPPVSSLDAGQPTLP) are disordered. A run of 7 helical transmembrane segments spans residues 64-84 (LIGG…SVLW), 98-118 (LFVL…AGFI), 423-443 (APMW…GAGI), 465-485 (AIWI…LGYI), 504-524 (ALSI…VMYL), 558-578 (SYGG…LVSP), and 580-600 (LAAW…VVAV).

Belongs to the glycosyltransferase 2 family. OpgH subfamily.

The protein resides in the cell inner membrane. It participates in glycan metabolism; osmoregulated periplasmic glucan (OPG) biosynthesis. Functionally, involved in the biosynthesis of osmoregulated periplasmic glucans (OPGs). This chain is Glucans biosynthesis glucosyltransferase H, found in Xanthomonas campestris pv. campestris (strain 8004).